The primary structure comprises 529 residues: tRNA-2-methylthio-N(6)-dimethylallyladenosine synthase 1 (529 aa).

The interval 1–21 is disordered; that stretch reads MTQDHIVTERPPATRNDTAGN. The region spanning 25–141 is the MTTase N-terminal domain; sequence RTYEVRTLGC…LPVLLERSRH (117 aa). [4Fe-4S] cluster is bound by residues Cys34, Cys70, Cys104, Cys178, Cys182, and Cys185. The Radical SAM core domain maps to 164–407; sequence RDSAYAAWVS…VALQERISLE (244 aa). Residues 410–480 form the TRAM domain; sequence RSLVGTRQEL…PHHLIADGPL (71 aa). A disordered region spans residues 481 to 504; it reads LQHRRTPAGDASERGQTPTTRGVG.

The protein belongs to the methylthiotransferase family. MiaB subfamily. As to quaternary structure, monomer. [4Fe-4S] cluster is required as a cofactor.

Its subcellular location is the cytoplasm. The enzyme catalyses N(6)-dimethylallyladenosine(37) in tRNA + (sulfur carrier)-SH + AH2 + 2 S-adenosyl-L-methionine = 2-methylsulfanyl-N(6)-dimethylallyladenosine(37) in tRNA + (sulfur carrier)-H + 5'-deoxyadenosine + L-methionine + A + S-adenosyl-L-homocysteine + 2 H(+). Its function is as follows. Catalyzes the methylthiolation of N6-(dimethylallyl)adenosine (i(6)A), leading to the formation of 2-methylthio-N6-(dimethylallyl)adenosine (ms(2)i(6)A) at position 37 in tRNAs that read codons beginning with uridine. The chain is tRNA-2-methylthio-N(6)-dimethylallyladenosine synthase 1 from Mycobacterium marinum (strain ATCC BAA-535 / M).